Reading from the N-terminus, the 786-residue chain is LPS-assembly protein LptD (786 aa).

An N-terminal signal peptide occupies residues 1 to 24 (MSFTSRSLLASFTGCLLYGTPAIA).

Belongs to the LptD family. As to quaternary structure, component of the lipopolysaccharide transport and assembly complex. Interacts with LptE and LptA.

Its subcellular location is the cell outer membrane. In terms of biological role, together with LptE, is involved in the assembly of lipopolysaccharide (LPS) at the surface of the outer membrane. This Aliivibrio fischeri (strain ATCC 700601 / ES114) (Vibrio fischeri) protein is LPS-assembly protein LptD.